Consider the following 181-residue polypeptide: PLAT domain-containing protein 1 (181 aa).

The signal sequence occupies residues 1-14; that stretch reads MARRDVLLPFLLLL. An N-acetylalanine modification is found at alanine 15. One can recognise a PLAT domain in the interval 29-156; the sequence is CVYTFYLRTG…SPYELTAVRN (128 aa).

As to expression, expressed in root tips, pericycle cells, lateral root primordia, stomata, leaf vasculature, hydathodes and floral organs.

It localises to the endoplasmic reticulum. The protein localises to the plastid. It is found in the chloroplast. Its subcellular location is the plastoglobule. Positive regulator of abiotic stress tolerance involved in the regulation of plant growth. May be a downstream target of the abscisic acid (ABA) signaling pathway. This chain is PLAT domain-containing protein 1, found in Arabidopsis thaliana (Mouse-ear cress).